We begin with the raw amino-acid sequence, 230 residues long: Modulator of macroautophagy TMEM150B-A (230 aa).

A topological domain (cytoplasmic) is located at residue M1. The chain crosses the membrane as a helical span at residues 2-22 (WAWALLPICLTIWATAGIWIV). The Extracellular segment spans residues 23–50 (YGMSVSNGSVNLSDGFPYISLCGTDPPQ). N-linked (GlcNAc...) asparagine glycans are attached at residues N29 and N33. Residues 51 to 71 (SCVFGQVLNVGAMLGVWISAI) traverse the membrane as a helical segment. The Cytoplasmic portion of the chain corresponds to 72–83 (RFQQIRDYNCHS). The helical transmembrane segment at 84-104 (VLNSVSLAMGILCALGTSIVG) threads the bilayer. Residues 105-115 (NFQQSNQLETH) lie on the Extracellular side of the membrane. Residues 116–136 (LAGAFLAFVIGNIYFWMQTAL) traverse the membrane as a helical segment. The Cytoplasmic portion of the chain corresponds to 137–150 (TYMVKPTHGGCYIG). The chain crosses the membrane as a helical span at residues 151 to 171 (PIRFCLSVACTALIVLMAVFL). The Extracellular portion of the chain corresponds to 172–183 (KMNMKSISAICE). A helical transmembrane segment spans residues 184–204 (WIVAMILFLLYGLFAVDFWHL). Topologically, residues 205-230 (DGHYFHVKKRTVIPNEMQVSTVTLSI) are cytoplasmic.

It belongs to the DRAM/TMEM150 family.

The protein localises to the cell membrane. It localises to the endosome membrane. Its subcellular location is the cytoplasmic vesicle. It is found in the autophagosome membrane. Functionally, modulator of macroautophagy that causes accumulation of autophagosomes under basal conditions and enhances autophagic flux. Represses cell death and promotes long-term clonogenic survival of cells grown in the absence of glucose in a macroautophagy-independent manner. May have some role in extracellular matrix engulfment or growth factor receptor recycling, both of which can modulate cell survival. This Xenopus laevis (African clawed frog) protein is Modulator of macroautophagy TMEM150B-A.